We begin with the raw amino-acid sequence, 299 residues long: Protein phosphatase 1 regulatory subunit 3D (299 aa).

Residues 1-22 (MSRGPSSAVLPSALGSRKLGPR) are disordered. 3 positions are modified to phosphoserine: serine 23, serine 25, and serine 28. The interval 37–94 (EPRACRPPGSPGRAPPPTPAPSGCDPRLRPIILRRARSLPSSPERRQKAAGAPGAACR) is disordered. Pro residues predominate over residues 44-56 (PGSPGRAPPPTPA). Over residues 57–67 (PSGCDPRLRPI) the composition is skewed to low complexity. Serine 74 carries the post-translational modification Phosphoserine. A compositionally biased stretch (low complexity) spans 85–94 (AAGAPGAACR). The PP1-binding motif signature appears at 101-104 (LRVR). At serine 133 the chain carries Phosphoserine. The CBM21 domain maps to 169–278 (GERLQRQLVC…NNDHRDYSLT (110 aa)).

As to quaternary structure, interacts with PPP1CC catalytic subunit of PP1, and associates with glycogen. Interacts with EPM2A; in the presence of NHLC1/malin the interaction leads to PPP1R3D ubiquitination and autophagic degradation. As to expression, expressed in all tissues tested. High expression in skeletal muscle and heart.

Seems to act as a glycogen-targeting subunit for PP1. PP1 is essential for cell division, and participates in the regulation of glycogen metabolism, muscle contractility and protein synthesis. In Homo sapiens (Human), this protein is Protein phosphatase 1 regulatory subunit 3D (PPP1R3D).